The primary structure comprises 547 residues: Chaperonin GroEL (547 aa).

ATP is bound by residues 30-33 (TLGP), Lys-51, 87-91 (DGTTT), Gly-415, and Asp-496.

Belongs to the chaperonin (HSP60) family. In terms of assembly, forms a cylinder of 14 subunits composed of two heptameric rings stacked back-to-back. Interacts with the co-chaperonin GroES.

It is found in the cytoplasm. It catalyses the reaction ATP + H2O + a folded polypeptide = ADP + phosphate + an unfolded polypeptide.. Its function is as follows. Together with its co-chaperonin GroES, plays an essential role in assisting protein folding. The GroEL-GroES system forms a nano-cage that allows encapsulation of the non-native substrate proteins and provides a physical environment optimized to promote and accelerate protein folding. This is Chaperonin GroEL from Histophilus somni (strain 129Pt) (Haemophilus somnus).